The following is a 166-amino-acid chain: MNTITGKVWNFGANIDTDVIIAARYLNSSDPEHLAKYVMEDADPEFPKKLKKGDIIVAGENFGCGSSREHAPIALKAAGIAAVVAPSFARIFYRNAFNMGLPIFELPESLEIKEGEEISINLDKGEITNNTTKKTYKFIPIPPFMQELIATGGLINYAKAEMKKAI.

This sequence belongs to the LeuD family. LeuD type 2 subfamily. As to quaternary structure, heterodimer of LeuC and LeuD.

The enzyme catalyses (2R,3S)-3-isopropylmalate = (2S)-2-isopropylmalate. The protein operates within amino-acid biosynthesis; L-leucine biosynthesis; L-leucine from 3-methyl-2-oxobutanoate: step 2/4. In terms of biological role, catalyzes the isomerization between 2-isopropylmalate and 3-isopropylmalate, via the formation of 2-isopropylmaleate. The protein is 3-isopropylmalate dehydratase small subunit of Aliarcobacter butzleri (strain RM4018) (Arcobacter butzleri).